A 78-amino-acid polypeptide reads, in one-letter code: uncharacterized protein (78 aa).

Residues 21–43 (SPFLFGAPLVGGLLGGFLGSALF) traverse the membrane as a helical segment.

It localises to the membrane. This is an uncharacterized protein from Bacillus subtilis (strain 168).